The sequence spans 59 residues: Large ribosomal subunit protein bL32C (59 aa).

It belongs to the bacterial ribosomal protein bL32 family.

This is Large ribosomal subunit protein bL32C (rpmF3) from Enterococcus faecalis (strain ATCC 700802 / V583).